We begin with the raw amino-acid sequence, 132 residues long: Glycerol-3-phosphate cytidylyltransferase (132 aa).

CTP contacts are provided by residues 9 to 10 (TY) and 14 to 17 (HYGH). Lysine 44 is a substrate binding site. A CTP-binding site is contributed by lysine 46. Residue lysine 77 coordinates substrate. Position 113–120 (113–120 (RTEGISTT)) interacts with CTP.

This sequence belongs to the cytidylyltransferase family. As to quaternary structure, homotetramer or homodimer.

The protein resides in the cytoplasm. It carries out the reaction sn-glycerol 3-phosphate + CTP + H(+) = CDP-glycerol + diphosphate. Its pathway is cell wall biogenesis; poly(ribitol phosphate) teichoic acid biosynthesis. In terms of biological role, catalyzes the transfer of the cytidylyl group of CTP to sn-glycerol 3-phosphate so the activated glycerol 3-phosphate can be used for teichoic acid synthesis, via incorporation into both the linkage unit by TarB and TarF. The polypeptide is Glycerol-3-phosphate cytidylyltransferase (Staphylococcus aureus (strain NCTC 8325 / PS 47)).